Consider the following 143-residue polypeptide: Hexaprenyl-diphosphate synthase small subunit ((2E,6E)-farnesyl-diphosphate specific) (143 aa).

In terms of assembly, dimer of heterodimer or heterotetramer composed of a small (Hexs-a) and large (Hexs-B) subunit.

The catalysed reaction is 3 isopentenyl diphosphate + (2E,6E)-farnesyl diphosphate = all-trans-hexaprenyl diphosphate + 3 diphosphate. In terms of biological role, catalyzes the condensation of three molecules of isopentenyl diphosphate with farnesyl diphosphate (FPP) to yield (all-E)-hexaprenyl diphosphate (HexPP; C30), the precursor of the prenyl side chain of menaquinone-6. Large subunit Hexs-B catalyzes the condensation reaction and the final product chain length is cooperatively regulated by both the Hexs-A and Hexs-B subunits using the whole size of the hydrophobic cleft as a ruler. This is Hexaprenyl-diphosphate synthase small subunit ((2E,6E)-farnesyl-diphosphate specific) (hexs-a) from Micrococcus luteus (Micrococcus lysodeikticus).